The primary structure comprises 977 residues: Macrophage colony-stimulating factor 1 receptor (977 aa).

Positions 1 to 18 (MFFALLFLIGILLGQVQG) are cleaved as a signal peptide. Over 19–519 (WSEPRIRLSS…MEVSDQIFTS (501 aa)) the chain is Extracellular. Ig-like C2-type domains lie at 22–109 (PRIR…VHVF), 120–198 (PSTS…EKVS), 213–305 (PYVY…TQLL), 316–407 (PKLS…ASIT), and 408–513 (FDIK…MEVS). The cysteines at positions 48 and 92 are disulfide-linked. N-linked (GlcNAc...) asparagine glycans are attached at residues Asn-98, Asn-101, Asn-154, Asn-163, Asn-244, Asn-286, Asn-298, Asn-361, Asn-424, and Asn-455. Intrachain disulfides connect Cys-138–Cys-187 and Cys-234–Cys-289. A disulfide bond links Cys-430 and Cys-495. The helical transmembrane segment at 520–540 (AMCGSTVAMVVLGLLLIFMIY) threads the bilayer. Over 541–977 (KYKQKPRYEI…LMKPNNYQFC (437 aa)) the chain is Cytoplasmic. Positions 544 to 576 (QKPRYEIRWKIIEATNGNNYTFIDPTQLPYNEK) are regulatory juxtamembrane domain. Tyr-563 carries the post-translational modification Phosphotyrosine; by autocatalysis. One can recognise a Protein kinase domain in the interval 584–917 (LKLGKTLGAG…KISQMIQRML (334 aa)). ATP contacts are provided by residues 590–598 (LGAGAFGKV) and Lys-618. Tyr-701 and Tyr-725 each carry phosphotyrosine; by autocatalysis. Asp-781 (proton acceptor) is an active-site residue. An activation loop region spans residues 799 to 821 (DFGLARDIMNDSNYVVKGNARLP). 2 positions are modified to phosphotyrosine; by autocatalysis: Tyr-812 and Tyr-929. Positions 919-977 (ETSEQQDTQEYKNIPTEAEAEQQLESCDPVKHEDESFETSCDQEEEDQPLMKPNNYQFC) are disordered. Acidic residues predominate over residues 953–966 (ESFETSCDQEEEDQ). Position 974 is a phosphotyrosine; by autocatalysis (Tyr-974).

It belongs to the protein kinase superfamily. Tyr protein kinase family. CSF-1/PDGF receptor subfamily. Monomer. Homodimer. Interacts with CSF1. In terms of processing, autophosphorylated in response to CSF1 binding. autophosphorylation, leading to its degradation. Ubiquitinated. Becomes rapidly polyubiquitinated after autophosphorylation, leading to its degradation.

It localises to the cell membrane. The enzyme catalyses L-tyrosyl-[protein] + ATP = O-phospho-L-tyrosyl-[protein] + ADP + H(+). With respect to regulation, present in an inactive conformation in the absence of bound ligand. CSF1 binding leads to dimerization and activation by autophosphorylation on tyrosine residues. Its function is as follows. Tyrosine-protein kinase that acts as a cell-surface receptor for CSF1 and plays an essential role in the regulation of survival, proliferation and differentiation of hematopoietic precursor cells, especially mononuclear phagocytes, such as macrophages and monocytes. Plays an important role in innate immunity and in inflammatory processes. Plays an important role in the regulation of osteoclast proliferation and differentiation, the regulation of bone resorption, and is required for normal bone development. Promotes reorganization of the actin cytoskeleton, regulates formation of membrane ruffles, cell adhesion and cell migration. Activates several signaling pathways in response to ligand binding. This chain is Macrophage colony-stimulating factor 1 receptor (csf1r), found in Danio rerio (Zebrafish).